The primary structure comprises 275 residues: 4-hydroxy-3-methylbut-2-enyl diphosphate reductase (275 aa).

Cys12 lines the [4Fe-4S] cluster pocket. 2 residues coordinate (2E)-4-hydroxy-3-methylbut-2-enyl diphosphate: His36 and His70. Dimethylallyl diphosphate contacts are provided by His36 and His70. His36 and His70 together coordinate isopentenyl diphosphate. Cys92 lines the [4Fe-4S] cluster pocket. His120 is a (2E)-4-hydroxy-3-methylbut-2-enyl diphosphate binding site. His120 provides a ligand contact to dimethylallyl diphosphate. Residue His120 participates in isopentenyl diphosphate binding. Glu122 functions as the Proton donor in the catalytic mechanism. Thr158 contacts (2E)-4-hydroxy-3-methylbut-2-enyl diphosphate. Residue Cys186 coordinates [4Fe-4S] cluster. Ser214, Ser215, Asn216, and Ser258 together coordinate (2E)-4-hydroxy-3-methylbut-2-enyl diphosphate. Ser214, Ser215, Asn216, and Ser258 together coordinate dimethylallyl diphosphate. Residues Ser214, Ser215, Asn216, and Ser258 each contribute to the isopentenyl diphosphate site.

The protein belongs to the IspH family. It depends on [4Fe-4S] cluster as a cofactor.

It carries out the reaction isopentenyl diphosphate + 2 oxidized [2Fe-2S]-[ferredoxin] + H2O = (2E)-4-hydroxy-3-methylbut-2-enyl diphosphate + 2 reduced [2Fe-2S]-[ferredoxin] + 2 H(+). The catalysed reaction is dimethylallyl diphosphate + 2 oxidized [2Fe-2S]-[ferredoxin] + H2O = (2E)-4-hydroxy-3-methylbut-2-enyl diphosphate + 2 reduced [2Fe-2S]-[ferredoxin] + 2 H(+). It participates in isoprenoid biosynthesis; dimethylallyl diphosphate biosynthesis; dimethylallyl diphosphate from (2E)-4-hydroxy-3-methylbutenyl diphosphate: step 1/1. Its pathway is isoprenoid biosynthesis; isopentenyl diphosphate biosynthesis via DXP pathway; isopentenyl diphosphate from 1-deoxy-D-xylulose 5-phosphate: step 6/6. Functionally, catalyzes the conversion of 1-hydroxy-2-methyl-2-(E)-butenyl 4-diphosphate (HMBPP) into a mixture of isopentenyl diphosphate (IPP) and dimethylallyl diphosphate (DMAPP). Acts in the terminal step of the DOXP/MEP pathway for isoprenoid precursor biosynthesis. The sequence is that of 4-hydroxy-3-methylbut-2-enyl diphosphate reductase from Sulfurimonas denitrificans (strain ATCC 33889 / DSM 1251) (Thiomicrospira denitrificans (strain ATCC 33889 / DSM 1251)).